A 27-amino-acid chain; its full sequence is Ferric reductase B (27 aa).

Homodimer. Requires FAD as cofactor.

It catalyses the reaction 2 a Fe(II)-siderophore + NAD(+) + H(+) = 2 a Fe(III)-siderophore + NADH. In terms of biological role, reductase activity that acts on Fe(3+)-chelates and uses both NADH and NADPH as electron donors. May play a role in iron uptake. This is Ferric reductase B (ferB) from Paracoccus denitrificans.